Consider the following 381-residue polypeptide: S-adenosylmethionine synthase (381 aa).

Histidine 15 serves as a coordination point for ATP. Aspartate 17 contributes to the Mg(2+) binding site. Position 43 (glutamate 43) interacts with K(+). L-methionine-binding residues include glutamate 56 and glutamine 99. Positions 99 to 109 are flexible loop; that stretch reads QSPDINQGVDR. ATP contacts are provided by residues 164–166, 230–231, aspartate 239, 245–246, alanine 262, and lysine 266; these read DAK, RF, and RK. Aspartate 239 is a binding site for L-methionine. Lysine 270 is an L-methionine binding site.

Belongs to the AdoMet synthase family. In terms of assembly, homotetramer; dimer of dimers. Mg(2+) serves as cofactor. The cofactor is K(+).

The protein localises to the cytoplasm. The enzyme catalyses L-methionine + ATP + H2O = S-adenosyl-L-methionine + phosphate + diphosphate. It participates in amino-acid biosynthesis; S-adenosyl-L-methionine biosynthesis; S-adenosyl-L-methionine from L-methionine: step 1/1. Its function is as follows. Catalyzes the formation of S-adenosylmethionine (AdoMet) from methionine and ATP. The overall synthetic reaction is composed of two sequential steps, AdoMet formation and the subsequent tripolyphosphate hydrolysis which occurs prior to release of AdoMet from the enzyme. In Alteromonas mediterranea (strain DSM 17117 / CIP 110805 / LMG 28347 / Deep ecotype), this protein is S-adenosylmethionine synthase.